A 292-amino-acid chain; its full sequence is Protein PHR1-LIKE 3 (292 aa).

Residues 34–94 (TDPKPRLRWT…HLQKFRLGRQ (61 aa)) enclose the HTH myb-type domain. A DNA-binding region (H-T-H motif) is located at residues 65–90 (PKTIMRTMGVKGLTLYHLKSHLQKFR). Residues 137 to 157 (TEALRAQMEVQRRLHEQLEVQ) adopt a coiled-coil conformation. Residues 150-155 (LHEQLE) carry the LHEQLE motif.

It belongs to the MYB-CC family. As to quaternary structure, homo- and heterodimers. Interacts with PHL2, but not with PHR1.

The protein localises to the nucleus. Its function is as follows. Transcriptional activator. Probable component of the central regulatory system controlling transcriptional responses to Pi starvation. Binds in a sequence-specific manner to phosphate starvation-regulated promoters. Required for female gametophyte development and function. The chain is Protein PHR1-LIKE 3 from Arabidopsis thaliana (Mouse-ear cress).